The following is a 2002-amino-acid chain: Methylcytosine dioxygenase TET2 (2002 aa).

Over residues 1–11 the composition is skewed to basic and acidic residues; that stretch reads MEQDRTNHVEG. A disordered region spans residues 1–22; that stretch reads MEQDRTNHVEGNRLSPFLIPSP. 3 positions are modified to phosphoserine: S15, S75, and S99. Residues 113 to 124 are compositionally biased toward basic and acidic residues; sequence KQDQKANGERRN. Disordered stretches follow at residues 113–154, 266–287, 349–368, 390–488, 703–748, 930–949, and 1075–1095; these read KQDQ…VSSV, HPSH…LPPK, GEEF…GSSE, DSFS…VNRN, LNQQ…QQKL, VPDQ…TQKH, and DSHT…PTKR. Polar residues-rich tracts occupy residues 126–143 and 267–283; these read GVSQ…NVSD and PSHT…SNSE. Residues 397-416 are compositionally biased toward pro residues; it reads TPPPPSQLLLSPPPPLPQVP. 2 stretches are compositionally biased toward polar residues: residues 479 to 488 and 703 to 718; these read RPQNNCVNRN and LNQQ…NSHL. The segment covering 731–748 has biased composition (low complexity); the sequence is QPSQSSHLPQNQQQQQKL. 2 stretches are compositionally biased toward polar residues: residues 935 to 944 and 1081 to 1095; these read GSHTQTPPQK and LEQQ…PTKR. Phosphoserine is present on residues S1107 and S1109. Residues C1133, C1135, C1193, H1219, and C1221 each coordinate Zn(2+). Position 1261 (R1261) interacts with 2-oxoglutarate. Zn(2+) is bound by residues C1271, C1273, C1289, and C1298. Residues 1290–1303 form an interaction with DNA region; it reads SWSMYYNGCKFARS. K1299 is covalently cross-linked (Glycyl lysine isopeptide (Lys-Gly) (interchain with G-Cter in ubiquitin)). Residue C1358 participates in Zn(2+) binding. C1374 contributes to the 2-oxoglutarate binding site. H1380 is a binding site for Zn(2+). Fe cation contacts are provided by H1382 and D1384. Residue N1387 coordinates substrate. H1416 lines the 2-oxoglutarate pocket. Disordered stretches follow at residues 1475-1507 and 1521-1587; these read AAEK…NASQ and VMQQ…HTSD. A compositionally biased stretch (low complexity) spans 1477-1487; sequence EKLSSLENSSN. The span at 1496 to 1507 shows a compositional bias: polar residues; it reads PSRTKQTENASQ. Composition is skewed to low complexity over residues 1523 to 1532 and 1539 to 1551; these read QQSQQPQPLQ and QQQQ…QPHH. A compositionally biased stretch (polar residues) spans 1554 to 1568; that stretch reads TESVNSYSASGSTNP. An Asymmetric dimethylarginine modification is found at R1682. Fe cation is bound at residue H1881. 1896–1898 is a 2-oxoglutarate binding site; that stretch reads RIS. 1902–1904 serves as a coordination point for substrate; the sequence is YQH. H1912 is a binding site for Zn(2+). The interval 1932–1961 is disordered; it reads CEKYGPDYVPQKSHGKKVKREPAEPHETSE. Residues 1951 to 1960 are compositionally biased toward basic and acidic residues; sequence REPAEPHETS.

This sequence belongs to the TET family. In terms of assembly, interacts with HCFC1. Interacts with OGT. Interacts with PROSER1; this interaction mediates TET2 O-GlcNAcylation and stability by promoting the interaction between OGT and TET2. Directly interacts (via C-terminus) with the DCAF1 component of the CRL4(VprBP) E3 ubiquitin-protein ligase complex. It depends on Fe(2+) as a cofactor. Zn(2+) is required as a cofactor. Post-translationally, may be glycosylated. It is unclear whether interaction with OGT leads to GlcNAcylation. According to a report, it is not GlcNAcylated by OGT. In contrast, another group reports GlcNAcylation by OGT in mouse ortholog. In terms of processing, monoubiquitinated at Lys-1299 by the DCX (DDB1-CUL4-X-box) E3 ubiquitin-protein ligase complex called CRL4(VprBP) or CUL4A-RBX1-DDB1-DCAF1/VPRBP complex; this modification promotes binding to DNA. Acetylated. Deacetylase HDAC6 acts as a valine sensor by binding to valine through its primate-specific SE14 repeat region and deacetylates TET2 following valine deprivation which promotes TET2-dependent DNA demethylation. As to expression, broadly expressed. Highly expressed in hematopoietic cells; highest expression observed in granulocytes. Expression is reduced in granulocytes from peripheral blood of patients affected by myelodysplastic syndromes.

The protein localises to the nucleus. It is found in the chromosome. It catalyses the reaction a 5-methyl-2'-deoxycytidine in DNA + 2-oxoglutarate + O2 = a 5-hydroxymethyl-2'-deoxycytidine in DNA + succinate + CO2. It carries out the reaction a 5-hydroxymethyl-2'-deoxycytidine in DNA + 2-oxoglutarate + O2 = a 5-formyl-2'-deoxycytidine in DNA + succinate + CO2 + H2O. The enzyme catalyses a 5-formyl-2'-deoxycytidine in DNA + 2-oxoglutarate + O2 = a 5-carboxyl-2'-deoxycytidine in DNA + succinate + CO2 + H(+). In terms of biological role, dioxygenase that catalyzes the conversion of the modified genomic base 5-methylcytosine (5mC) into 5-hydroxymethylcytosine (5hmC) and plays a key role in active DNA demethylation. Has a preference for 5-hydroxymethylcytosine in CpG motifs. Also mediates subsequent conversion of 5hmC into 5-formylcytosine (5fC), and conversion of 5fC to 5-carboxylcytosine (5caC). Conversion of 5mC into 5hmC, 5fC and 5caC probably constitutes the first step in cytosine demethylation. Methylation at the C5 position of cytosine bases is an epigenetic modification of the mammalian genome which plays an important role in transcriptional regulation. In addition to its role in DNA demethylation, also involved in the recruitment of the O-GlcNAc transferase OGT to CpG-rich transcription start sites of active genes, thereby promoting histone H2B GlcNAcylation by OGT. This is Methylcytosine dioxygenase TET2 (TET2) from Homo sapiens (Human).